The primary structure comprises 1228 residues: Nitrate reductase alpha chain (1228 aa).

In terms of domain architecture, 4Fe-4S Mo/W bis-MGD-type spans 47 to 111 (DKVVRSTHGV…SFSWYIYSPL (65 aa)). Positions 54, 58, 62, and 97 each coordinate [4Fe-4S] cluster. Position 227 (D227) interacts with Mo-bis(molybdopterin guanine dinucleotide).

This sequence belongs to the prokaryotic molybdopterin-containing oxidoreductase family. The cofactor is [4Fe-4S] cluster. Mo-bis(molybdopterin guanine dinucleotide) serves as cofactor.

The protein localises to the cell membrane. It carries out the reaction nitrate + a quinol = a quinone + nitrite + H2O. Functionally, the alpha chain is the actual site of nitrate reduction. This Bacillus subtilis (strain 168) protein is Nitrate reductase alpha chain (narG).